Here is a 59-residue protein sequence, read N- to C-terminus: Cytochrome c oxidase subunit 7 (59 aa).

Residues 1–24 (MKNTIVQQQRFLQSIHKPTYLQRP) lie on the Mitochondrial matrix side of the membrane. The helical transmembrane segment at 25–47 (GSFALVYPYYAVMAGLGLYSLYA) threads the bilayer. Residues 48–59 (SGRVIFGKKDAF) lie on the Mitochondrial intermembrane side of the membrane.

The protein belongs to the cytochrome c oxidase subunit 7 family. As to quaternary structure, component of the cytochrome c oxidase (complex IV, CIV), a multisubunit enzyme composed of a catalytic core of 3 subunits and several supernumerary subunits. The complex exists as a monomer or a dimer and forms supercomplexes (SCs) in the inner mitochondrial membrane with ubiquinol-cytochrome c oxidoreductase (cytochrome b-c1 complex, complex III, CIII).

Its subcellular location is the mitochondrion inner membrane. The protein operates within energy metabolism; oxidative phosphorylation. Component of the cytochrome c oxidase, the last enzyme in the mitochondrial electron transport chain which drives oxidative phosphorylation. The respiratory chain contains 3 multisubunit complexes succinate dehydrogenase (complex II, CII), ubiquinol-cytochrome c oxidoreductase (cytochrome b-c1 complex, complex III, CIII) and cytochrome c oxidase (complex IV, CIV), that cooperate to transfer electrons derived from NADH and succinate to molecular oxygen, creating an electrochemical gradient over the inner membrane that drives transmembrane transport and the ATP synthase. Cytochrome c oxidase is the component of the respiratory chain that catalyzes the reduction of oxygen to water. Electrons originating from reduced cytochrome c in the intermembrane space (IMS) are transferred via the dinuclear copper A center (CU(A)) of subunit 2 and heme A of subunit 1 to the active site in subunit 1, a binuclear center (BNC) formed by heme A3 and copper B (CU(B)). The BNC reduces molecular oxygen to 2 water molecules using 4 electrons from cytochrome c in the IMS and 4 protons from the mitochondrial matrix. The polypeptide is Cytochrome c oxidase subunit 7 (cox7) (Schizosaccharomyces pombe (strain 972 / ATCC 24843) (Fission yeast)).